The sequence spans 242 residues: Cytochrome c oxidase subunit 2 (242 aa).

Over 7-33 the chain is Mitochondrial intermembrane; it reads DVPVPYGLYFQDSATPTFDGIIELHDI. The helical transmembrane segment at 34–55 threads the bilayer; sequence VMFYIVVTIVLVSYLLFVIIKN. The Mitochondrial matrix portion of the chain corresponds to 56–73; the sequence is FSNDHISYKYLTHGTTLE. A helical transmembrane segment spans residues 74 to 98; that stretch reads IVWTIFPVVILLFIAFPSFILLYLC. The Mitochondrial intermembrane portion of the chain corresponds to 99-242; sequence DEVIDPAMTI…DKFLSWLDEQ (144 aa). Cu cation contacts are provided by H177, C212, E214, C216, H220, and M223. A Mg(2+)-binding site is contributed by E214.

It belongs to the cytochrome c oxidase subunit 2 family. Component of the cytochrome c oxidase (complex IV, CIV), a multisubunit enzyme composed of a catalytic core of 3 subunits and several supernumerary subunits. The complex exists as a monomer or a dimer and forms supercomplexes (SCs) in the inner mitochondrial membrane with ubiquinol-cytochrome c oxidoreductase (cytochrome b-c1 complex, complex III, CIII). Cu cation serves as cofactor. In terms of processing, the signal sequence of COX2 is processed by IMP1.

It localises to the mitochondrion inner membrane. The enzyme catalyses 4 Fe(II)-[cytochrome c] + O2 + 8 H(+)(in) = 4 Fe(III)-[cytochrome c] + 2 H2O + 4 H(+)(out). Functionally, component of the cytochrome c oxidase, the last enzyme in the mitochondrial electron transport chain which drives oxidative phosphorylation. The respiratory chain contains 3 multisubunit complexes succinate dehydrogenase (complex II, CII), ubiquinol-cytochrome c oxidoreductase (cytochrome b-c1 complex, complex III, CIII) and cytochrome c oxidase (complex IV, CIV), that cooperate to transfer electrons derived from NADH and succinate to molecular oxygen, creating an electrochemical gradient over the inner membrane that drives transmembrane transport and the ATP synthase. Cytochrome c oxidase is the component of the respiratory chain that catalyzes the reduction of oxygen to water. Electrons originating from reduced cytochrome c in the intermembrane space (IMS) are transferred via the dinuclear copper A center (CU(A)) of subunit 2 and heme A of subunit 1 to the active site in subunit 1, a binuclear center (BNC) formed by heme A3 and copper B (CU(B)). The BNC reduces molecular oxygen to 2 water molecules using 4 electrons from cytochrome c in the IMS and 4 protons from the mitochondrial matrix. This Yarrowia lipolytica (strain CLIB 122 / E 150) (Yeast) protein is Cytochrome c oxidase subunit 2 (COX2).